The following is a 326-amino-acid chain: Cyclin-dependent kinase B2-1 (326 aa).

A Protein kinase domain is found at 28 to 318 (YEKLEKVGEG…AKKAMEHPYF (291 aa)). ATP is bound by residues 34 to 42 (VGEGTYGKV) and K57. Position 38 is a phosphothreonine (T38). At Y39 the chain carries Phosphotyrosine. The Proton acceptor role is filled by D159. At T193 the chain carries Phosphothreonine.

It belongs to the protein kinase superfamily. CMGC Ser/Thr protein kinase family. CDC2/CDKX subfamily. In terms of assembly, interacts with CYCB2-1 and CYCB2-2. Binding to CYCB2-1 or CYCB2-2 activates CDK kinase. As to expression, expressed in the dividing region of the root apex and the intercalary meristem of internodes.

It is found in the nucleus. The protein localises to the cytoplasm. It localises to the cytoskeleton. The protein resides in the spindle. Its subcellular location is the phragmoplast. It carries out the reaction L-seryl-[protein] + ATP = O-phospho-L-seryl-[protein] + ADP + H(+). The catalysed reaction is L-threonyl-[protein] + ATP = O-phospho-L-threonyl-[protein] + ADP + H(+). The enzyme catalyses [DNA-directed RNA polymerase] + ATP = phospho-[DNA-directed RNA polymerase] + ADP + H(+). In terms of biological role, forms a complex with CYCB2-1 or CYCB2-2 that activates CDK kinase in tobacco BY2 cells during G2/M (mitosis) phases. May be involved in the regulation of the cell cycle at the G2/M transition. The protein is Cyclin-dependent kinase B2-1 (CDKB2-1) of Oryza sativa subsp. japonica (Rice).